Consider the following 257-residue polypeptide: Protein YIPF5 (257 aa).

The Cytoplasmic portion of the chain corresponds to 1–124 (MSGFDNLNSG…RAADGSIMNE (124 aa)). Residues 75 to 106 (PTTPQPFYGDSFEEEPPLLEELGINFDHIWQK) are interaction with Sec23. A helical membrane pass occupies residues 125–145 (TDLAGPVVFCLAFGATLLLAG). Residue Lys-146 is a topological domain, lumenal. Residues 147–167 (IQFGYVYGISAIGCLGMFCLL) form a helical membrane-spanning segment. Over 168–173 (NLMSMT) the chain is Cytoplasmic. A helical transmembrane segment spans residues 174–194 (GVSFGCVASVLGYCLLPMILL). The Lumenal portion of the chain corresponds to 195-196 (SS). A helical membrane pass occupies residues 197–217 (FAVVFSLQGMVGILLTATIIG). Residues 218–236 (WCSFSASKIFISALAMDGQ) lie on the Cytoplasmic side of the membrane. The chain crosses the membrane as a helical span at residues 237–257 (QLLVAYPCALLYGVFALISVF).

The protein belongs to the YIP1 family. As to quaternary structure, interacts with the COPII coat components Sec23 (SEC23A and/or SEC23B) and Sec24 (SEC24A and/or SEC24B). Interacts with YIF1A. May interact with RAB1A. Interacts with YIPF3 and YIPF4. As to expression, ubiquitously expressed.

It localises to the golgi apparatus. It is found in the cis-Golgi network membrane. The protein localises to the cytoplasmic vesicle. Its subcellular location is the COPII-coated vesicle. The protein resides in the endoplasmic reticulum membrane. Functionally, plays a role in transport between endoplasmic reticulum and Golgi. In pancreatic beta cells, required to transport proinsulin from endoplasmic reticulum into the Golgi. The polypeptide is Protein YIPF5 (Mus musculus (Mouse)).